Reading from the N-terminus, the 417-residue chain is MKYLWLFLIYAIGLFATDKTLDIIKTIQKLPKIEVRYSIDNDANYALKLHEVLANDLKTSQHFDVSQNKEQGAINYAELKDKKVHLVALVSVAVENGNKISRLKLYDVDTGTLKKTFDYPIVSLDLYPFAAHNMAIVVNDYLKAPSIAWMKRLIVFSKYIGPGITNIALADYTMRYQKEIIKNNRLNIFPKWANAEQTEFYYTQYGEKTPMILKYNIQKATHENIASSQGMAVVSSVSSDGSKILMSLAPDGQPDVYLYDTHKKTKTKITRYPGIDVSGVFLEDDKSMAFVSDRSGYPNIYMKKLGLKESAEQLLYEGRSNESIDAYKDSIVYVSRENLNEFGKTVFNLNLIALNSKYIRRLTVNGSNQMPRFSMDGRNIMYIKKTSQEYAMGLILLDYNQSFLFPLKNVKIQAFDW.

The N-terminal stretch at 1–16 is a signal peptide; that stretch reads MKYLWLFLIYAIGLFA.

This sequence belongs to the TolB family. In terms of assembly, the Tol-Pal system is composed of five core proteins: the inner membrane proteins TolA, TolQ and TolR, the periplasmic protein TolB and the outer membrane protein Pal. They form a network linking the inner and outer membranes and the peptidoglycan layer.

It is found in the periplasm. Part of the Tol-Pal system, which plays a role in outer membrane invagination during cell division and is important for maintaining outer membrane integrity. The polypeptide is Tol-Pal system protein TolB (Helicobacter pylori (strain J99 / ATCC 700824) (Campylobacter pylori J99)).